Here is a 413-residue protein sequence, read N- to C-terminus: Multifunctional CCA protein (413 aa).

Gly8 and Arg11 together coordinate ATP. CTP-binding residues include Gly8 and Arg11. Asp21 and Asp23 together coordinate Mg(2+). Residues Arg91, Arg137, and Arg140 each coordinate ATP. CTP is bound by residues Arg91, Arg137, and Arg140. The 102-residue stretch at 228 to 329 (TGIHTLMVLE…VKIFDKADLW (102 aa)) folds into the HD domain.

This sequence belongs to the tRNA nucleotidyltransferase/poly(A) polymerase family. Bacterial CCA-adding enzyme type 1 subfamily. In terms of assembly, monomer. Can also form homodimers and oligomers. It depends on Mg(2+) as a cofactor. Requires Ni(2+) as cofactor.

The enzyme catalyses a tRNA precursor + 2 CTP + ATP = a tRNA with a 3' CCA end + 3 diphosphate. The catalysed reaction is a tRNA with a 3' CCA end + 2 CTP + ATP = a tRNA with a 3' CCACCA end + 3 diphosphate. Catalyzes the addition and repair of the essential 3'-terminal CCA sequence in tRNAs without using a nucleic acid template. Adds these three nucleotides in the order of C, C, and A to the tRNA nucleotide-73, using CTP and ATP as substrates and producing inorganic pyrophosphate. tRNA 3'-terminal CCA addition is required both for tRNA processing and repair. Also involved in tRNA surveillance by mediating tandem CCA addition to generate a CCACCA at the 3' terminus of unstable tRNAs. While stable tRNAs receive only 3'-terminal CCA, unstable tRNAs are marked with CCACCA and rapidly degraded. In Shewanella sediminis (strain HAW-EB3), this protein is Multifunctional CCA protein.